Reading from the N-terminus, the 539-residue chain is Hydroxylamine reductase (539 aa).

Residues cysteine 3, cysteine 6, cysteine 13, and cysteine 19 each contribute to the [4Fe-4S] cluster site. Hybrid [4Fe-2O-2S] cluster is bound by residues histidine 240, glutamate 264, cysteine 308, cysteine 395, cysteine 423, cysteine 448, glutamate 482, and lysine 484. Cysteine 395 carries the cysteine persulfide modification.

This sequence belongs to the HCP family. It depends on [4Fe-4S] cluster as a cofactor. Hybrid [4Fe-2O-2S] cluster is required as a cofactor.

Its subcellular location is the cytoplasm. The catalysed reaction is A + NH4(+) + H2O = hydroxylamine + AH2 + H(+). Functionally, catalyzes the reduction of hydroxylamine to form NH(3) and H(2)O. This Thermodesulfovibrio yellowstonii (strain ATCC 51303 / DSM 11347 / YP87) protein is Hydroxylamine reductase.